The primary structure comprises 473 residues: Ribosomal protein uS12 methylthiotransferase RimO (473 aa).

The MTTase N-terminal domain maps to 30-141 (ASVAVLHLGC…IVQIIERVER (112 aa)). [4Fe-4S] cluster contacts are provided by Cys39, Cys75, Cys104, Cys179, Cys183, and Cys186. Residues 165 to 394 (TTHAPVAYLR…MQVQQGITFR (230 aa)) form the Radical SAM core domain. The TRAM domain occupies 397–463 (REQVGRVVPV…PYDLFGQVVA (67 aa)).

This sequence belongs to the methylthiotransferase family. RimO subfamily. Requires [4Fe-4S] cluster as cofactor.

Its subcellular location is the cytoplasm. The catalysed reaction is L-aspartate(89)-[ribosomal protein uS12]-hydrogen + (sulfur carrier)-SH + AH2 + 2 S-adenosyl-L-methionine = 3-methylsulfanyl-L-aspartate(89)-[ribosomal protein uS12]-hydrogen + (sulfur carrier)-H + 5'-deoxyadenosine + L-methionine + A + S-adenosyl-L-homocysteine + 2 H(+). In terms of biological role, catalyzes the methylthiolation of an aspartic acid residue of ribosomal protein uS12. This chain is Ribosomal protein uS12 methylthiotransferase RimO, found in Synechococcus sp. (strain JA-2-3B'a(2-13)) (Cyanobacteria bacterium Yellowstone B-Prime).